The following is a 284-amino-acid chain: MTVNNEISKAFSKHADDYERVAKVQKEIGSRLFERLQYLKIAPRRILDLGCGPGFFSKELALLYPKAQIVGMDLSFAMLEQARKKQGWRRKWPLVSADMQKMPFATGAFDLVFANQVIHWSSSLGMVFRELNRVMNVNGCLMFTTLGPDTFKELQTAWSAANQYAHVNEFVDMHDIGDCLIAEHFMDPVIDMELLSIHYETLPQLLLALKTQGVRNINPKRNHGLTGKSAWKQFEAQYATMRTTTGKYPLTYEVVYGQAWKGAQRKMEQGIETWIPVSRVVKKS.

It belongs to the methyltransferase superfamily.

The enzyme catalyses malonyl-[ACP] + S-adenosyl-L-methionine = malonyl-[ACP] methyl ester + S-adenosyl-L-homocysteine. Its pathway is cofactor biosynthesis; biotin biosynthesis. Functionally, converts the free carboxyl group of a malonyl-thioester to its methyl ester by transfer of a methyl group from S-adenosyl-L-methionine (SAM). It allows to synthesize pimeloyl-ACP via the fatty acid synthetic pathway. This Legionella pneumophila subsp. pneumophila (strain Philadelphia 1 / ATCC 33152 / DSM 7513) protein is Malonyl-[acyl-carrier protein] O-methyltransferase.